Consider the following 249-residue polypeptide: Eukaryotic translation initiation factor 3 subunit K (249 aa).

The PCI domain maps to 46 to 222 (FDCYANLALL…VKVPTNKENE (177 aa)).

Belongs to the eIF-3 subunit K family. As to quaternary structure, component of the eukaryotic translation initiation factor 3 (eIF-3) complex.

It is found in the cytoplasm. Its function is as follows. Component of the eukaryotic translation initiation factor 3 (eIF-3) complex, which is involved in protein synthesis of a specialized repertoire of mRNAs and, together with other initiation factors, stimulates binding of mRNA and methionyl-tRNAi to the 40S ribosome. The eIF-3 complex specifically targets and initiates translation of a subset of mRNAs involved in cell proliferation. This chain is Eukaryotic translation initiation factor 3 subunit K, found in Neosartorya fischeri (strain ATCC 1020 / DSM 3700 / CBS 544.65 / FGSC A1164 / JCM 1740 / NRRL 181 / WB 181) (Aspergillus fischerianus).